Consider the following 149-residue polypeptide: Calmodulin-like protein 3 (149 aa).

EF-hand domains are found at residues 8-43 (EQVT…LGQN), 44-79 (PTEA…KMKD), 81-116 (DNEE…LGEK), and 117-149 (LSDE…LVSK). D21, D23, D25, C27, E32, D57, D59, N61, T63, E68, D94, D96, N98, E105, D130, D132, D134, Q136, and E141 together coordinate Ca(2+).

It belongs to the calmodulin family. Interacts with MYO10, the interaction is calcium-dependent and essential for MYO10 function in filopodial extension. As to expression, expressed in normal mammary, prostate, cervical, and epidermal tissues. It is greatly reduced or undetectable in transformed cells.

In terms of biological role, may function as a specific light chain of unconventional myosin-10 (MYO10), also enhances MYO10 translation, possibly by acting as a chaperone for the emerging MYO10 heavy chain protein. May compete with calmodulin by binding, with different affinities, to cellular substrates. The sequence is that of Calmodulin-like protein 3 (CALML3) from Homo sapiens (Human).